We begin with the raw amino-acid sequence, 347 residues long: Probable RNA methyltransferase azo0122 (347 aa).

The active-site Proton acceptor is glutamate 89. Residues 92 to 318 (LLLRDGLCVS…AKLRQSAGQD (227 aa)) form the Radical SAM core domain. Cysteines 99 and 323 form a disulfide. The [4Fe-4S] cluster site is built by cysteine 106, cysteine 110, and cysteine 113. S-adenosyl-L-methionine is bound by residues 151–152 (GE), serine 181, 204–206 (SLH), and asparagine 280. The S-methylcysteine intermediate role is filled by cysteine 323.

This sequence belongs to the radical SAM superfamily. RlmN family. The cofactor is [4Fe-4S] cluster.

The protein resides in the cytoplasm. The polypeptide is Probable RNA methyltransferase azo0122 (Azoarcus sp. (strain BH72)).